The chain runs to 550 residues: tRNA modification GTPase MnmE (550 aa).

(6S)-5-formyl-5,6,7,8-tetrahydrofolate is bound by residues Arg-20, Glu-78, and Arg-116. The TrmE-type G domain occupies Gly-212–Ser-478. A K(+)-binding site is contributed by Asn-222. GTP is bound by residues Asn-222 to Thr-227, Thr-241 to Thr-247, and Asp-266 to Gly-269. Ser-226 is a Mg(2+) binding site. K(+) contacts are provided by Thr-241, Ile-243, and Thr-246. Residue Thr-247 participates in Mg(2+) binding. Lys-550 is a (6S)-5-formyl-5,6,7,8-tetrahydrofolate binding site.

Belongs to the TRAFAC class TrmE-Era-EngA-EngB-Septin-like GTPase superfamily. TrmE GTPase family. Homodimer. Heterotetramer of two MnmE and two MnmG subunits. It depends on K(+) as a cofactor.

The protein localises to the cytoplasm. Its function is as follows. Exhibits a very high intrinsic GTPase hydrolysis rate. Involved in the addition of a carboxymethylaminomethyl (cmnm) group at the wobble position (U34) of certain tRNAs, forming tRNA-cmnm(5)s(2)U34. The protein is tRNA modification GTPase MnmE of Neorickettsia sennetsu (strain ATCC VR-367 / Miyayama) (Ehrlichia sennetsu).